Reading from the N-terminus, the 200-residue chain is Recombination protein RecR (200 aa).

Residues 59–74 form a C4-type zinc finger; the sequence is CEICGNIDTRSPCTVC. Residues 82 to 177 enclose the Toprim domain; the sequence is SIIVVVADVA…KVTRLAHGVP (96 aa).

Belongs to the RecR family.

Its function is as follows. May play a role in DNA repair. It seems to be involved in an RecBC-independent recombinational process of DNA repair. It may act with RecF and RecO. This Nitrobacter hamburgensis (strain DSM 10229 / NCIMB 13809 / X14) protein is Recombination protein RecR.